An 87-amino-acid polypeptide reads, in one-letter code: Pyocin-S1 immunity protein (87 aa).

This sequence belongs to the colicins ColE2/ColE8/ColE9 and pyocins S1/S2 family.

The chain is Pyocin-S1 immunity protein (imm1) from Pseudomonas aeruginosa.